Reading from the N-terminus, the 228-residue chain is Glutamate transport system permease protein GluC (228 aa).

4 consecutive transmembrane segments (helical) span residues 16–36, 64–84, 100–120, and 195–215; these read FWVTIQLTVYSAIGSMILGTI, LTLVILFCSFGLYQNLGLTLA, AVLGFILYTSAFVAESLRSGI, and LFVVFAIFAVGFMILTLPMGL. Residues 16 to 217 form the ABC transmembrane type-1 domain; the sequence is FWVTIQLTVY…ILTLPMGLGL (202 aa).

Belongs to the binding-protein-dependent transport system permease family. HisMQ subfamily. The complex is composed of two ATP-binding proteins (GluA), two transmembrane proteins (GluC and GluD) and a solute-binding protein (GluB).

It is found in the cell membrane. Functionally, part of the ABC transporter complex GluABCD involved in glutamate uptake. Probably responsible for the translocation of the substrate across the membrane. The polypeptide is Glutamate transport system permease protein GluC (Corynebacterium efficiens (strain DSM 44549 / YS-314 / AJ 12310 / JCM 11189 / NBRC 100395)).